A 33-amino-acid chain; its full sequence is MSDIN-like toxin proprotein 2 (33 aa).

Positions 1–10 are excised as a propeptide; it reads MSDINATRLP. Residues 11 to 18 constitute a cross-link (cyclopeptide (Ile-Pro)); that stretch reads IILAPIIP. Positions 19 to 33 are excised as a propeptide; sequence CINDDVNSTLTSGER.

This sequence belongs to the MSDIN fungal toxin family. Post-translationally, processed by the macrocyclase-peptidase enzyme POPB to yield a toxic cyclic octapeptide. POPB first removes 10 residues from the N-terminus. Conformational trapping of the remaining peptide forces the enzyme to release this intermediate rather than proceed to macrocyclization. The enzyme rebinds the remaining peptide in a different conformation and catalyzes macrocyclization of the N-terminal 8 residues.

Functionally, probable toxin that belongs to the MSDIN-like toxin family responsible for a large number of food poisoning cases and deaths. This Amanita phalloides (Death cap) protein is MSDIN-like toxin proprotein 2.